The chain runs to 311 residues: Methionyl-tRNA formyltransferase (311 aa).

Residue 109–112 (SLLP) coordinates (6S)-5,6,7,8-tetrahydrofolate.

The protein belongs to the Fmt family.

The catalysed reaction is L-methionyl-tRNA(fMet) + (6R)-10-formyltetrahydrofolate = N-formyl-L-methionyl-tRNA(fMet) + (6S)-5,6,7,8-tetrahydrofolate + H(+). Functionally, attaches a formyl group to the free amino group of methionyl-tRNA(fMet). The formyl group appears to play a dual role in the initiator identity of N-formylmethionyl-tRNA by promoting its recognition by IF2 and preventing the misappropriation of this tRNA by the elongation apparatus. The chain is Methionyl-tRNA formyltransferase from Staphylococcus aureus (strain JH1).